Here is an 801-residue protein sequence, read N- to C-terminus: Glycerol-3-phosphate acyltransferase 2, mitochondrial (801 aa).

A disordered region spans residues 1–24 (METMLKSNPQMQQRNNHSGQETSL). Topologically, residues 1 to 305 (METMLKSNPQ…PGPRLSALGQ (305 aa)) are cytoplasmic. The tract at residues 180-290 (QLHKGQMKMV…SGQPLLIFLE (111 aa)) is acyltransferase. The HXXXXD motif signature appears at 205 to 210 (HKSLLD). Residues 306–332 (AWLGLVVQAVQAGIVPDATLVPVATAY) traverse the membrane as a helical segment. The Mitochondrial intermembrane segment spans residues 333–449 (DLVPDAPCNM…QLLVRRLSRH (117 aa)). Residues 450–472 (VLSASVASSAVMSTAIMATLLLL) traverse the membrane as a helical segment. Residues 473–795 (KHQKGVVLSQ…DNQDKLEQFI (323 aa)) are Cytoplasmic-facing.

It belongs to the GPAT/DAPAT family. Interacts with PIWIL2. In terms of tissue distribution, expressed in spermatocytes and spermatides.

The protein localises to the mitochondrion outer membrane. It catalyses the reaction sn-glycerol 3-phosphate + an acyl-CoA = a 1-acyl-sn-glycero-3-phosphate + CoA. The enzyme catalyses a 1-acyl-sn-glycero-3-phosphate + an acyl-CoA = a 1,2-diacyl-sn-glycero-3-phosphate + CoA. The catalysed reaction is 1-(9Z-octadecenoyl)-sn-glycero-3-phosphate + (9Z)-octadecenoyl-CoA = 1,2-di-(9Z-octadecenoyl)-sn-glycero-3-phosphate + CoA. It carries out the reaction 1-(9Z-octadecenoyl)-sn-glycero-3-phosphate + (5Z,8Z,11Z,14Z)-eicosatetraenoyl-CoA = 1-(9Z)-octadecenoyl-2-(5Z,8Z,11Z,14Z)-eicosatetraenoyl-sn-glycero-3-phosphate + CoA. It catalyses the reaction (5Z,8Z,11Z,14Z)-eicosatetraenoyl-CoA + sn-glycerol 3-phosphate = 1-(5Z,8Z,11Z,14Z-eicosatetraenoyl)-sn-glycero-3-phosphate + CoA. It functions in the pathway phospholipid metabolism; CDP-diacylglycerol biosynthesis; CDP-diacylglycerol from sn-glycerol 3-phosphate: step 1/3. Inhibited by N-ethylmaleimide (NEM). Functionally, transfers an acyl-group from acyl-ACP to the sn-1 position of glycerol-3-phosphate producing a lysophosphatidic acid (LPA), an essential step for the triacylglycerol (TAG) and glycerophospholipids. In vitro also transfers an acyl-group from acyl-ACP to the LPA producing a phosphatidic acid (PA). Prefers arachidonoyl-CoA as the acyl donor. Required for primary processing step during piRNA biosynthesis. Molecular mechanisms by which it promotes piRNA biosynthesis are unclear and do not involve its acyltransferase activity. The protein is Glycerol-3-phosphate acyltransferase 2, mitochondrial of Rattus norvegicus (Rat).